Here is a 100-residue protein sequence, read N- to C-terminus: uncharacterized protein (100 aa).

This is an uncharacterized protein from Acheta domesticus (House cricket).